Reading from the N-terminus, the 401-residue chain is Splicing factor 45 (401 aa).

An N-acetylserine modification is found at Ser-2. The residue at position 2 (Ser-2) is a Phosphoserine. A Glycyl lysine isopeptide (Lys-Gly) (interchain with G-Cter in SUMO2) cross-link involves residue Lys-15. An N6-acetyllysine modification is found at Lys-21. Residues Lys-24 and Lys-33 each participate in a glycyl lysine isopeptide (Lys-Gly) (interchain with G-Cter in SUMO2) cross-link. Lys-41 is modified (N6-acetyllysine; alternate). Lys-41 participates in a covalent cross-link: Glycyl lysine isopeptide (Lys-Gly) (interchain with G-Cter in SUMO2); alternate. The segment covering 57-68 (LKRGGSSDDRQI) has biased composition (basic and acidic residues). Disordered regions lie at residues 57–84 (LKRG…DPVP) and 114–233 (RQRE…FLAN). Lys-58 participates in a covalent cross-link: Glycyl lysine isopeptide (Lys-Gly) (interchain with G-Cter in SUMO2). Residue Thr-71 is modified to Phosphothreonine. Positions 114–153 (RQREERQRQRELERQKEIEEREKRRKDRHEASGFARRPDP) are enriched in basic and acidic residues. 2 positions are modified to phosphoserine: Ser-155 and Ser-169. Positions 182-200 (VEKDKELPRDFPYEEDSRP) are enriched in basic and acidic residues. Phosphoserine is present on Ser-222. Residues 235 to 283 (GGTVAHKIMQKYGFREGQGLGKHEQGLSTALSVEKTSKRGGKIIVGDAT) form the G-patch domain. Thr-237 is subject to Phosphothreonine. A Glycyl lysine isopeptide (Lys-Gly) (interchain with G-Cter in SUMO2) cross-link involves residue Lys-256. At Ser-266 the chain carries Phosphoserine. Lys-276 participates in a covalent cross-link: Glycyl lysine isopeptide (Lys-Gly) (interchain with G-Cter in SUMO2). Phosphoserine is present on residues Ser-291 and Ser-293. The 80-residue stretch at 306–385 (VVLLRNMVGA…YFGGRVVKAC (80 aa)) folds into the RRM domain.

As to quaternary structure, binds SXL. Associates with the spliceosome. Interacts with SF3B1, SF1 and U2AF2.

Its subcellular location is the nucleus. Its function is as follows. Splice factor that binds to the single-stranded 3'AG at the exon/intron border and promotes its utilization in the second catalytic step. Involved in the regulation of alternative splicing and the utilization of cryptic splice sites. Promotes the utilization of a cryptic splice site created by the beta-110 mutation in the HBB gene. The resulting frameshift leads to sickle cell anemia. This is Splicing factor 45 (RBM17) from Homo sapiens (Human).